Consider the following 477-residue polypeptide: Methylenetetrahydrofolate--tRNA-(uracil-5-)-methyltransferase TrmFO (477 aa).

14 to 19 serves as a coordination point for FAD; the sequence is GGGLAG.

Belongs to the MnmG family. TrmFO subfamily. It depends on FAD as a cofactor.

Its subcellular location is the cytoplasm. It carries out the reaction uridine(54) in tRNA + (6R)-5,10-methylene-5,6,7,8-tetrahydrofolate + NADH + H(+) = 5-methyluridine(54) in tRNA + (6S)-5,6,7,8-tetrahydrofolate + NAD(+). The catalysed reaction is uridine(54) in tRNA + (6R)-5,10-methylene-5,6,7,8-tetrahydrofolate + NADPH + H(+) = 5-methyluridine(54) in tRNA + (6S)-5,6,7,8-tetrahydrofolate + NADP(+). Functionally, catalyzes the folate-dependent formation of 5-methyl-uridine at position 54 (M-5-U54) in all tRNAs. The polypeptide is Methylenetetrahydrofolate--tRNA-(uracil-5-)-methyltransferase TrmFO (Rhizobium johnstonii (strain DSM 114642 / LMG 32736 / 3841) (Rhizobium leguminosarum bv. viciae)).